Here is a 417-residue protein sequence, read N- to C-terminus: Serine hydroxymethyltransferase 1 (417 aa).

(6S)-5,6,7,8-tetrahydrofolate contacts are provided by residues leucine 121 and 125–127; that span reads GHL. An N6-(pyridoxal phosphate)lysine modification is found at lysine 229. 355-357 is a binding site for (6S)-5,6,7,8-tetrahydrofolate; sequence SPF.

This sequence belongs to the SHMT family. Homodimer. Pyridoxal 5'-phosphate is required as a cofactor.

Its subcellular location is the cytoplasm. The catalysed reaction is (6R)-5,10-methylene-5,6,7,8-tetrahydrofolate + glycine + H2O = (6S)-5,6,7,8-tetrahydrofolate + L-serine. Its pathway is one-carbon metabolism; tetrahydrofolate interconversion. It functions in the pathway amino-acid biosynthesis; glycine biosynthesis; glycine from L-serine: step 1/1. Functionally, catalyzes the reversible interconversion of serine and glycine with tetrahydrofolate (THF) serving as the one-carbon carrier. This reaction serves as the major source of one-carbon groups required for the biosynthesis of purines, thymidylate, methionine, and other important biomolecules. Also exhibits THF-independent aldolase activity toward beta-hydroxyamino acids, producing glycine and aldehydes, via a retro-aldol mechanism. The sequence is that of Serine hydroxymethyltransferase 1 from Pectobacterium atrosepticum (strain SCRI 1043 / ATCC BAA-672) (Erwinia carotovora subsp. atroseptica).